Reading from the N-terminus, the 849-residue chain is Probable ATP-dependent RNA helicase ddx20 (849 aa).

Residues 9 to 39 (FSNPMNSNSSNNIENNNNSNNNNNNFKNNFK) are disordered. The short motif at 55–83 (ITFSELLLQKEVLKGLEDGGYQRPSPIQL) is the Q motif element. Residues R77, Q82, 99–106 (AKSGTGKT), and 102–107 (GTGKTI) each bind ATP. Residues 86 to 319 (IPLGISGVDL…KLYMNNENLV (234 aa)) enclose the Helicase ATP-binding domain. A DEAD box motif is present at residues 255–258 (DEAD). The region spanning 355-499 (KCKSLVLVLE…QIENENENEN (145 aa)) is the Helicase C-terminal domain. 4 disordered regions span residues 480–504 (QQQQ…NNNE), 572–644 (INEN…ENDN), 667–737 (SNNN…YPHY), and 761–817 (NNYN…NNPY). Acidic residues-rich tracts occupy residues 583 to 595 (NEDE…EDDY), 604 to 615 (EDEEEEQEEDDY), and 624 to 644 (EEEE…ENDN). Low complexity-rich tracts occupy residues 667 to 687 (SNNN…NNHY) and 696 to 720 (KNSI…SQSN).

It belongs to the DEAD box helicase family. DDX20 subfamily. In terms of assembly, part of the core SMN complex.

Its subcellular location is the cytoplasm. It is found in the nucleus. The catalysed reaction is ATP + H2O = ADP + phosphate + H(+). In terms of biological role, the SMN complex catalyzes the assembly of small nuclear ribonucleoproteins (snRNPs), the building blocks of the spliceosome, and thereby plays an important role in the splicing of cellular pre-mRNAs. Most spliceosomal snRNPs contain a common set of Sm proteins SNRPB, SNRPD1, SNRPD2, SNRPD3, SNRPE, SNRPF and SNRPG that assemble in a heptameric protein ring on the Sm site of the small nuclear RNA to form the core snRNP (Sm core). In the cytosol, the Sm proteins SNRPD1, SNRPD2, SNRPE, SNRPF and SNRPG are trapped in an inactive 6S pICln-Sm complex by the chaperone CLNS1A that controls the assembly of the core snRNP. To assemble core snRNPs, the SMN complex accepts the trapped 5Sm proteins from CLNS1A forming an intermediate. Binding of snRNA inside 5Sm triggers eviction of the SMN complex, thereby allowing binding of SNRPD3 and SNRPB to complete assembly of the core snRNP. May also play a role in the metabolism of small nucleolar ribonucleoprotein (snoRNPs). In Dictyostelium discoideum (Social amoeba), this protein is Probable ATP-dependent RNA helicase ddx20 (ddx20).